The sequence spans 57 residues: uncharacterized protein (57 aa).

A helical transmembrane segment spans residues 4-26 (FMPIRVFLYSYVIINSLLSSFFH).

The protein resides in the membrane. This is an uncharacterized protein from Saccharomyces cerevisiae (strain ATCC 204508 / S288c) (Baker's yeast).